A 405-amino-acid polypeptide reads, in one-letter code: S-adenosylmethionine synthase (405 aa).

139-144 contributes to the ATP binding site; that stretch reads GQGSVD.

It belongs to the AdoMet synthase 2 family. It depends on Mg(2+) as a cofactor.

The catalysed reaction is L-methionine + ATP + H2O = S-adenosyl-L-methionine + phosphate + diphosphate. It functions in the pathway amino-acid biosynthesis; S-adenosyl-L-methionine biosynthesis; S-adenosyl-L-methionine from L-methionine: step 1/1. Its function is as follows. Catalyzes the formation of S-adenosylmethionine from methionine and ATP. This Thermococcus gammatolerans (strain DSM 15229 / JCM 11827 / EJ3) protein is S-adenosylmethionine synthase.